Consider the following 586-residue polypeptide: Probable riboflavin import ATP-binding protein RfuB (586 aa).

ABC transporter domains are found at residues 46–299 (RAVD…NECI) and 343–586 (LRVE…DSHT). ATP is bound at residue 89–96 (GKNGAGKS).

This sequence belongs to the ABC transporter superfamily. The complex is probably composed of two ATP-binding proteins (RfuB), two transmembrane proteins (RfuC and RfuD) and a solute-binding protein (RfuA).

The protein localises to the cell inner membrane. Functionally, probably part of the ABC transporter complex RfuABCD involved in riboflavin import. Probably responsible for energy coupling to the transport system. This Treponema pallidum (strain Nichols) protein is Probable riboflavin import ATP-binding protein RfuB.